The sequence spans 86 residues: Large ribosomal subunit protein bL31B (86 aa).

It belongs to the bacterial ribosomal protein bL31 family. Type B subfamily. Part of the 50S ribosomal subunit.

The protein is Large ribosomal subunit protein bL31B of Streptococcus equi subsp. zooepidemicus (strain H70).